Reading from the N-terminus, the 142-residue chain is HTH-type transcriptional regulator MntR (142 aa).

An HTH dtxR-type domain is found at 1–63 (MPTPSMEDYI…YEKYRGLILT (63 aa)). Residues Asp-8, Glu-11, His-77, Glu-99, Glu-102, and His-103 each contribute to the Mn(2+) site.

This sequence belongs to the DtxR/MntR family. Homodimer.

It localises to the cytoplasm. With respect to regulation, DNA binding is strongly activated by Mn(2+). Functionally, central regulator of manganese homeostasis. The polypeptide is HTH-type transcriptional regulator MntR (Listeria innocua serovar 6a (strain ATCC BAA-680 / CLIP 11262)).